A 152-amino-acid polypeptide reads, in one-letter code: Putative multi-protein-binding factor 1 (152 aa).

The segment at 1–24 is disordered; that stretch reads MSDDWESKTVIGSRARVGGGGPRA. One can recognise an HTH cro/C1-type domain in the interval 86–140; the sequence is IIKGRSEKGLTQKELAVKINEKPQVVNDYESGRAQPNQQVLSKMERVLGIKLRGK. A DNA-binding region (H-T-H motif) is located at residues 97–116; that stretch reads QKELAVKINEKPQVVNDYES.

It belongs to the MBF1 family.

Transcriptional coactivator that stimulates GCN4-dependent transcriptional activity by bridging the DNA-binding region of GCN4 and TBP (SPT15), thereby recruiting TBP to GCN4-bound promoters. Involved in induction of the ribosome quality control (RQC) pathway; a pathway that degrades nascent peptide chains during problematic translation. Required to prevent stalled ribosomes from frameshifting. This chain is Putative multi-protein-binding factor 1 (MBF1), found in Yarrowia lipolytica (strain CLIB 122 / E 150) (Yeast).